The chain runs to 290 residues: Translin-associated protein X (290 aa).

A disordered region spans residues 1-34 (MNGKEGPGGFRKRKHDNFPHNQRREGKDASSSSP). Over residues 16–28 (DNFPHNQRREGKD) the composition is skewed to basic and acidic residues. The interval 73–208 (LLHRITSAPD…MRMCINSVGN (136 aa)) is interaction with C1D. Mg(2+)-binding residues include Glu-129 and Glu-197. A Glycyl lysine isopeptide (Lys-Gly) (interchain with G-Cter in SUMO2) cross-link involves residue Lys-279.

Belongs to the translin family. In terms of assembly, ring-shaped heterooctamer of six TSN and two TSNAX subunits. Interacts with GOLGA3, TSNAXIP1, SUN1 and AKAP9. Interacts with the homodimeric form of C1D following gamma-radiation. Interacts with TSN and C1D in a mutually exclusive manner. In terms of processing, sumoylated with SUMO1. Detected in cerebellum.

The protein resides in the cytoplasm. Its subcellular location is the perinuclear region. It is found in the golgi apparatus. The protein localises to the nucleus. Acts in combination with TSN as an endonuclease involved in the activation of the RNA-induced silencing complex (RISC). Possible role in spermatogenesis. This Rattus norvegicus (Rat) protein is Translin-associated protein X (Tsnax).